Here is a 47-residue protein sequence, read N- to C-terminus: Ruminococcin-A (47 aa).

A signal peptide spans 1–23; that stretch reads MRNDVLTLTNPMEEKELEQILGG. Thr30 and Thr39 each carry 2,3-didehydrobutyrine. Residues 30 to 35 constitute a cross-link (beta-methyllanthionine (Thr-Cys)); that stretch reads TISHEC. Positions 32 to 46 form a cross-link, lanthionine (Ser-Cys); that stretch reads SHECNMNTWQFLFTC. A cross-link (beta-methyllanthionine (Thr-Cys)) is located at residues 45 to 47; it reads TCC.

Maturation of lantibiotics involves the enzymatic conversion of Thr, and Ser into dehydrated AA and the formation of thioether bonds with cysteine. This is followed by membrane translocation and cleavage of the modified precursor. In terms of processing, it is not established whether the 2,3-didehydrobutyrine is the E- or Z-isomer.

The protein localises to the secreted. Lanthionine-containing peptide antibiotic (lantibiotic) active on Gram-positive bacteria. The bactericidal activity of lantibiotics is based on depolarization of energized bacterial cytoplasmic membranes, initiated by the formation of aqueous transmembrane pores. Ruminococcin A is a broad spectrum bacteriocin exhibiting activity against a wide range of pathogenic clostridia and B.longum. This chain is Ruminococcin-A (rumA1), found in Mediterraneibacter gnavus (Ruminococcus gnavus).